Consider the following 194-residue polypeptide: Probable thymidylate kinase (194 aa).

8–15 contacts ATP; it reads GIDGSGKT.

It belongs to the thymidylate kinase family.

The enzyme catalyses dTMP + ATP = dTDP + ADP. The sequence is that of Probable thymidylate kinase from Sulfolobus acidocaldarius (strain ATCC 33909 / DSM 639 / JCM 8929 / NBRC 15157 / NCIMB 11770).